A 390-amino-acid chain; its full sequence is Ribosomal RNA large subunit methyltransferase G (390 aa).

Belongs to the methyltransferase superfamily. RlmG family.

It localises to the cytoplasm. The catalysed reaction is guanosine(1835) in 23S rRNA + S-adenosyl-L-methionine = N(2)-methylguanosine(1835) in 23S rRNA + S-adenosyl-L-homocysteine + H(+). Its function is as follows. Specifically methylates the guanine in position 1835 (m2G1835) of 23S rRNA. The sequence is that of Ribosomal RNA large subunit methyltransferase G from Alcanivorax borkumensis (strain ATCC 700651 / DSM 11573 / NCIMB 13689 / SK2).